The primary structure comprises 214 residues: ATP-dependent Clp protease proteolytic subunit 2 (214 aa).

The active-site Nucleophile is Ser110. His135 is an active-site residue.

This sequence belongs to the peptidase S14 family. Fourteen ClpP subunits assemble into 2 heptameric rings which stack back to back to give a disk-like structure with a central cavity, resembling the structure of eukaryotic proteasomes.

It is found in the cytoplasm. The catalysed reaction is Hydrolysis of proteins to small peptides in the presence of ATP and magnesium. alpha-casein is the usual test substrate. In the absence of ATP, only oligopeptides shorter than five residues are hydrolyzed (such as succinyl-Leu-Tyr-|-NHMec, and Leu-Tyr-Leu-|-Tyr-Trp, in which cleavage of the -Tyr-|-Leu- and -Tyr-|-Trp bonds also occurs).. Cleaves peptides in various proteins in a process that requires ATP hydrolysis. Has a chymotrypsin-like activity. Plays a major role in the degradation of misfolded proteins. The protein is ATP-dependent Clp protease proteolytic subunit 2 of Mycobacterium bovis (strain ATCC BAA-935 / AF2122/97).